Consider the following 150-residue polypeptide: UPF0336 protein SCO4636 (150 aa).

Positions 8-116 (VGRSYPPTAP…STIEAIKSMA (109 aa)) constitute a MaoC-like domain.

The protein belongs to the UPF0336 family.

The protein is UPF0336 protein SCO4636 of Streptomyces coelicolor (strain ATCC BAA-471 / A3(2) / M145).